The following is a 427-amino-acid chain: Serine--tRNA ligase (427 aa).

231-233 is a binding site for L-serine; the sequence is TAE. 262-264 is a binding site for ATP; the sequence is RSE. Glu285 lines the L-serine pocket. An ATP-binding site is contributed by 349 to 352; that stretch reads EISS. Residue Ser385 coordinates L-serine.

The protein belongs to the class-II aminoacyl-tRNA synthetase family. Type-1 seryl-tRNA synthetase subfamily. In terms of assembly, homodimer. The tRNA molecule binds across the dimer.

It is found in the cytoplasm. The catalysed reaction is tRNA(Ser) + L-serine + ATP = L-seryl-tRNA(Ser) + AMP + diphosphate + H(+). The enzyme catalyses tRNA(Sec) + L-serine + ATP = L-seryl-tRNA(Sec) + AMP + diphosphate + H(+). It participates in aminoacyl-tRNA biosynthesis; selenocysteinyl-tRNA(Sec) biosynthesis; L-seryl-tRNA(Sec) from L-serine and tRNA(Sec): step 1/1. Catalyzes the attachment of serine to tRNA(Ser). Is also able to aminoacylate tRNA(Sec) with serine, to form the misacylated tRNA L-seryl-tRNA(Sec), which will be further converted into selenocysteinyl-tRNA(Sec). The polypeptide is Serine--tRNA ligase (Methylococcus capsulatus (strain ATCC 33009 / NCIMB 11132 / Bath)).